Here is a 504-residue protein sequence, read N- to C-terminus: MKNEKRKTGIEPKVFFPPLIIVGILCWLTVRDLDAANVVINAVFSYVTNVWGWAFEWYMVVMLFGWFWLVFGPYAKKRLGNEPPEFSTASWIFMMFASCTSAAVLFWGSIEIYYYISTPPFGLEPNSTGAKELGLAYSLFHWGPLPWATYSFLSVAFAYFFFVRKMEVIRPSSTLVPLVGEKHAKGLFGTIVDNFYLVALIFAMGTSLGLATPLVTECMQWLFGIPHTLQLDAIIITCWIILNTICVACGLQKGVRIASDVRSYLSFLMLGWVFIVSGASFIMNYFTDSVGMLLMYLPRMLFYTDPIAKGGFPQGWTVFYWAWWVIYAIQMSIFLARISRGRTVRELCFGMVLGLTASTWILWTVLGSNTLLLIDKNIINIPNLIEQYGVARAIIETWAALPLSTATMWGFFILCFIATVTLVNACSYTLAMSTCREVRDGEEPPLLVRIGWSVLVGIIGIVLLALGGLKPIQTAIIAGGCPLFFVNIMVTLSFIKDAKQNWKD.

A run of 12 helical transmembrane segments spans residues 10-30, 51-71, 92-112, 143-163, 195-215, 231-251, 263-283, 316-336, 347-367, 398-418, 446-466, and 475-495; these read IEPK…WLTV, WGWA…WLVF, IFMM…SIEI, GPLP…FFFV, FYLV…TPLV, LDAI…ACGL, SYLS…SFIM, WTVF…IFLA, LCFG…TVLG, WAAL…CFIA, LLVR…LLAL, and AIIA…LSFI.

It belongs to the BCCT transporter (TC 2.A.15) family. CaiT subfamily. In terms of assembly, homotrimer.

The protein resides in the cell inner membrane. The enzyme catalyses 4-(trimethylamino)butanoate(in) + (R)-carnitine(out) = 4-(trimethylamino)butanoate(out) + (R)-carnitine(in). It participates in amine and polyamine metabolism; carnitine metabolism. In terms of biological role, catalyzes the exchange of L-carnitine for gamma-butyrobetaine. The protein is L-carnitine/gamma-butyrobetaine antiporter of Escherichia coli O81 (strain ED1a).